A 506-amino-acid polypeptide reads, in one-letter code: Galactose/methyl galactoside import ATP-binding protein MglA (506 aa).

2 consecutive ABC transporter domains span residues Leu14–Ser249 and Val264–Leu506. Residue Gly46–Ser53 coordinates ATP.

It belongs to the ABC transporter superfamily. Galactose/methyl galactoside importer (TC 3.A.1.2.3) family. As to quaternary structure, the complex is composed of one ATP-binding protein (MglA), two transmembrane proteins (MglC) and a solute-binding protein (MglB).

The protein resides in the cell inner membrane. The catalysed reaction is D-galactose(out) + ATP + H2O = D-galactose(in) + ADP + phosphate + H(+). It catalyses the reaction methyl beta-D-galactoside(out) + ATP + H2O = methyl beta-D-galactoside(in) + ADP + phosphate + H(+). Part of the ABC transporter complex MglABC involved in galactose/methyl galactoside import. Responsible for energy coupling to the transport system. The sequence is that of Galactose/methyl galactoside import ATP-binding protein MglA from Escherichia coli O6:K15:H31 (strain 536 / UPEC).